The following is a 595-amino-acid chain: Protein UL31 (595 aa).

The signal sequence occupies residues 1 to 40; sequence MGDKPTLVTLLTVAVSSPPPSSPLPLVSFTELLLPPPSVA. The disordered stretch occupies residues 47–94; the sequence is TATSEVGEKTAEQEVAAAGPETRNERRENREDEGGETRTTGTTAVKRS. The segment covering 68–82 has biased composition (basic and acidic residues); it reads TRNERRENREDEGGE.

The protein belongs to the herpesviridae U10 family. As to quaternary structure, interacts with host CGAS.

Its subcellular location is the host cytoplasm. The protein localises to the host nucleus. Plays a role in the inhibition of host innate immune system by targeting host CGAS and promoting dissociation of DNA from CGAS, thereby inhibiting the enzymatic activity of CGAS. The chain is Protein UL31 (UL31) from Human cytomegalovirus (strain Merlin) (HHV-5).